A 236-amino-acid chain; its full sequence is MIIYPAIDIIDGKCVRLQQGSYSDVTVFGDSPVDMARKWESLGAGYLHVVDLDGARSGKSENAEIIKQIAKTLKIPVQTGGGIRNLETVETYLSGGLSRIILGTSAVSNREMLISALKEYKGKIAVGIDAKDGKVAIHGWEKTSDYTAVEFAKEVESLGAKTIIYTDISRDGMLKGPNLQAMKEMADSVSMDVIASGGVSRLKDIIDLKQTGVSGVIVGKAIYTGNVDLKEAILAI.

Asp-8 (proton acceptor) is an active-site residue. The active-site Proton donor is the Asp-129.

This sequence belongs to the HisA/HisF family.

Its subcellular location is the cytoplasm. The catalysed reaction is 1-(5-phospho-beta-D-ribosyl)-5-[(5-phospho-beta-D-ribosylamino)methylideneamino]imidazole-4-carboxamide = 5-[(5-phospho-1-deoxy-D-ribulos-1-ylimino)methylamino]-1-(5-phospho-beta-D-ribosyl)imidazole-4-carboxamide. It participates in amino-acid biosynthesis; L-histidine biosynthesis; L-histidine from 5-phospho-alpha-D-ribose 1-diphosphate: step 4/9. The polypeptide is 1-(5-phosphoribosyl)-5-[(5-phosphoribosylamino)methylideneamino] imidazole-4-carboxamide isomerase (Ruminiclostridium cellulolyticum (strain ATCC 35319 / DSM 5812 / JCM 6584 / H10) (Clostridium cellulolyticum)).